The sequence spans 418 residues: Gamma-glutamyl phosphate reductase (418 aa).

Belongs to the gamma-glutamyl phosphate reductase family.

It is found in the cytoplasm. It catalyses the reaction L-glutamate 5-semialdehyde + phosphate + NADP(+) = L-glutamyl 5-phosphate + NADPH + H(+). Its pathway is amino-acid biosynthesis; L-proline biosynthesis; L-glutamate 5-semialdehyde from L-glutamate: step 2/2. In terms of biological role, catalyzes the NADPH-dependent reduction of L-glutamate 5-phosphate into L-glutamate 5-semialdehyde and phosphate. The product spontaneously undergoes cyclization to form 1-pyrroline-5-carboxylate. The protein is Gamma-glutamyl phosphate reductase of Teredinibacter turnerae (strain ATCC 39867 / T7901).